The chain runs to 236 residues: Purine nucleoside phosphorylase (236 aa).

H5 provides a ligand contact to a purine D-ribonucleoside. Phosphate contacts are provided by residues G21, R25, R43, and R86–T89. Residues E163, E180–E182, and S204–D205 each bind a purine D-ribonucleoside.

The protein belongs to the PNP/UDP phosphorylase family. In terms of assembly, homohexamer; disulfide-linked. Trimer of homodimers, with three symmetric intersubunit disulfide bonds linking the dimers to one another.

It carries out the reaction S-methyl-5'-thioadenosine + phosphate = 5-(methylsulfanyl)-alpha-D-ribose 1-phosphate + adenine. The enzyme catalyses a purine D-ribonucleoside + phosphate = a purine nucleobase + alpha-D-ribose 1-phosphate. It catalyses the reaction a purine 2'-deoxy-D-ribonucleoside + phosphate = a purine nucleobase + 2-deoxy-alpha-D-ribose 1-phosphate. Its pathway is purine metabolism; purine nucleoside salvage. Its function is as follows. Cleavage of guanosine or inosine to respective bases and sugar-1-phosphate molecules. Cleaves inosine, guanosine, and adenosine with a better efficiency than MTA. The sequence is that of Purine nucleoside phosphorylase from Saccharolobus solfataricus (strain ATCC 35092 / DSM 1617 / JCM 11322 / P2) (Sulfolobus solfataricus).